A 797-amino-acid polypeptide reads, in one-letter code: Outer membrane protein assembly factor BamA (797 aa).

A signal peptide spans 1–19 (MKKLLIASLLFGTTTTVFA). POTRA domains lie at 22–89 (FVAK…VVAK), 90–170 (SIIS…INED), 173–259 (AKLA…VNEG), 262–341 (YDLR…VDAG), and 344–418 (LTVR…VKER).

Belongs to the BamA family. Part of the Bam complex.

The protein localises to the cell outer membrane. Part of the outer membrane protein assembly complex, which is involved in assembly and insertion of beta-barrel proteins into the outer membrane. The protein is Outer membrane protein assembly factor BamA of Haemophilus influenzae.